The chain runs to 179 residues: Large ribosomal subunit protein uL5 (179 aa).

Belongs to the universal ribosomal protein uL5 family. Part of the 50S ribosomal subunit; part of the 5S rRNA/L5/L18/L25 subcomplex. Contacts the 5S rRNA and the P site tRNA. Forms a bridge to the 30S subunit in the 70S ribosome.

This is one of the proteins that bind and probably mediate the attachment of the 5S RNA into the large ribosomal subunit, where it forms part of the central protuberance. In the 70S ribosome it contacts protein S13 of the 30S subunit (bridge B1b), connecting the 2 subunits; this bridge is implicated in subunit movement. Contacts the P site tRNA; the 5S rRNA and some of its associated proteins might help stabilize positioning of ribosome-bound tRNAs. The polypeptide is Large ribosomal subunit protein uL5 (Clostridium botulinum (strain Alaska E43 / Type E3)).